A 263-amino-acid polypeptide reads, in one-letter code: Cytochrome c oxidase subunit 3 (263 aa).

Helical transmembrane passes span 7–27, 44–64, 78–98, 120–140, 145–165, 191–211, and 241–261; these read ITVL…KAHL, FSVG…VYSI, GMLS…WGIL, LILT…CLQF, GMSL…ECFA, VTGL…IYFI, and ITIL…YFFY.

The protein belongs to the cytochrome c oxidase subunit 3 family. Component of the cytochrome c oxidase (complex IV, CIV), a multisubunit enzyme composed of a catalytic core of 3 subunits and several supernumerary subunits. The complex exists as a monomer or a dimer and forms supercomplexes (SCs) in the inner mitochondrial membrane with ubiquinol-cytochrome c oxidoreductase (cytochrome b-c1 complex, complex III, CIII).

It localises to the mitochondrion inner membrane. It catalyses the reaction 4 Fe(II)-[cytochrome c] + O2 + 8 H(+)(in) = 4 Fe(III)-[cytochrome c] + 2 H2O + 4 H(+)(out). Functionally, component of the cytochrome c oxidase, the last enzyme in the mitochondrial electron transport chain which drives oxidative phosphorylation. The respiratory chain contains 3 multisubunit complexes succinate dehydrogenase (complex II, CII), ubiquinol-cytochrome c oxidoreductase (cytochrome b-c1 complex, complex III, CIII) and cytochrome c oxidase (complex IV, CIV), that cooperate to transfer electrons derived from NADH and succinate to molecular oxygen, creating an electrochemical gradient over the inner membrane that drives transmembrane transport and the ATP synthase. Cytochrome c oxidase is the component of the respiratory chain that catalyzes the reduction of oxygen to water. Electrons originating from reduced cytochrome c in the intermembrane space (IMS) are transferred via the dinuclear copper A center (CU(A)) of subunit 2 and heme A of subunit 1 to the active site in subunit 1, a binuclear center (BNC) formed by heme A3 and copper B (CU(B)). The BNC reduces molecular oxygen to 2 water molecules using 4 electrons from cytochrome c in the IMS and 4 protons from the mitochondrial matrix. This is Cytochrome c oxidase subunit 3 (COIII) from Plasmodium vivax.